Here is a 252-residue protein sequence, read N- to C-terminus: MFS-type transporter cctQ (252 aa).

2 consecutive transmembrane segments (helical) span residues 54 to 74 (IGSL…VVLP) and 116 to 136 (FGSF…IVGF). Residue N179 is glycosylated (N-linked (GlcNAc...) asparagine). The next 2 membrane-spanning stretches (helical) occupy residues 180–200 (FSIC…WILA) and 208–228 (FLVW…YFTT).

This sequence belongs to the major facilitator superfamily.

It localises to the membrane. It functions in the pathway mycotoxin biosynthesis. Its function is as follows. MFS-type transporter; part of the gene cluster that mediates the biosynthesis of the mycotoxin cyclochlorotine, a hepatotoxic and carcinogenic cyclic chlorinated pentapeptide. Most likely responsible for cyclochlorotine secretion and thereby may contribute to intrinsic resistance. This is MFS-type transporter cctQ from Talaromyces islandicus (Penicillium islandicum).